The sequence spans 442 residues: Probable serine/threonine-protein kinase PBL17 (442 aa).

The N-myristoyl glycine moiety is linked to residue Gly2. Cys4 carries S-palmitoyl cysteine lipidation. Thr79 is subject to Phosphothreonine. The 281-residue stretch at 90–370 (FRPDYILGEG…NHVVEVLETL (281 aa)) folds into the Protein kinase domain. ATP-binding positions include 96–104 (LGEGGFGVV) and Lys125. Tyr170 carries the post-translational modification Phosphotyrosine. Asp220 acts as the Proton acceptor in catalysis. Ser254 bears the Phosphoserine mark. Phosphothreonine is present on residues Thr255 and Thr260. Tyr268 bears the Phosphotyrosine mark. Residues 385–442 (HSRGKSVTLYEASSDSQGTRDGNGQRRRRPESGRSKSEAAVDTEKYVSTLSEPDTTKI) form a disordered region. Residues 395-406 (EASSDSQGTRDG) show a composition bias toward polar residues. Over residues 414-429 (PESGRSKSEAAVDTEK) the composition is skewed to basic and acidic residues. The segment covering 430–442 (YVSTLSEPDTTKI) has biased composition (polar residues).

The protein belongs to the protein kinase superfamily. Ser/Thr protein kinase family.

Its subcellular location is the cell membrane. It catalyses the reaction L-seryl-[protein] + ATP = O-phospho-L-seryl-[protein] + ADP + H(+). It carries out the reaction L-threonyl-[protein] + ATP = O-phospho-L-threonyl-[protein] + ADP + H(+). May be involved in plant defense signaling. The protein is Probable serine/threonine-protein kinase PBL17 of Arabidopsis thaliana (Mouse-ear cress).